Consider the following 227-residue polypeptide: uncharacterized protein (227 aa).

The next 2 helical transmembrane spans lie at 13–35 (CVRAYAVFAIAIMVLTVAWFAFS) and 155–177 (IFFRGCVVFLVMLTLTISSMVFL). The tract at residues 192–227 (GDARPRPAGPQGTARSRTDEAQVSPGTPPECPVSVF) is disordered. Pro residues predominate over residues 217–227 (GTPPECPVSVF).

The protein resides in the cell membrane. This is an uncharacterized protein from Treponema pallidum (strain Nichols).